The sequence spans 828 residues: Protein ELFN1 (828 aa).

Residues 1–25 (MAGHGWGTAWVLVAAATLLHAGGLA) form the signal peptide. At 26–418 (QGDCWLIEGD…VPSPSTATHY (393 aa)) the chain is on the extracellular side. 5 LRR repeats span residues 61–82 (TIVD…SLSR), 85–106 (NLTY…AFSG), 109–130 (NLQV…MLRG), 133–154 (KLEY…AFWE), and 157–178 (NIVN…TFAG). N-linked (GlcNAc...) asparagine glycosylation is found at Asn-85, Asn-90, and Asn-122. Residues 190 to 253 (NPFYCSCELL…LSKLQSVCTE (64 aa)) enclose the LRRCT domain. An N-linked (GlcNAc...) asparagine glycan is attached at Asn-210. A disordered region spans residues 258–293 (AEVLGPPRPVPGRSQPGHSPPPPPPEPSDMPCADDE). Over residues 275–285 (HSPPPPPPEPS) the composition is skewed to pro residues. Residues 312-399 (QTEARPSMKV…HNHTCLTICL (88 aa)) form the Fibronectin type-III domain. Asn-376 carries an N-linked (GlcNAc...) asparagine glycan. A helical membrane pass occupies residues 419 to 439 (IMTILGCLFGMVLVLGAVYYC). Over 440–828 (LRKRRRQEEK…WKGVSAQHKS (389 aa)) the chain is Cytoplasmic. Residues Ser-460 and Ser-646 each carry the phosphoserine modification. 2 disordered regions span residues 627–674 (HHSV…IEKS) and 697–731 (KSRQ…GLGG). Residues 638–652 (RASTSSSGSARSPRT) show a composition bias toward low complexity. Residues 697–706 (KSRQYGEHRH) show a composition bias toward basic and acidic residues. Over residues 714–725 (AEPPAPPPPPPT) the composition is skewed to pro residues.

In terms of assembly, interacts with PPP1CA. As to expression, selectively expressed in perialvear somatostatin (Sst)-containing interneurons.

It localises to the membrane. The protein resides in the cell projection. The protein localises to the dendrite. Functionally, postsynaptic protein that regulates circuit dynamics in the central nervous system by modulating the temporal dynamics of interneuron recruitment. Specifically present in excitatory synapses onto oriens-lacunosum molecular (OLM) interneurons and acts as a regulator of presynaptic release probability to direct the formation of highly facilitating pyramidal-OLM synapses. Inhibits phosphatase activity of protein phosphatase 1 (PP1) complexes. The polypeptide is Protein ELFN1 (Elfn1) (Mus musculus (Mouse)).